Here is a 925-residue protein sequence, read N- to C-terminus: Translation initiation factor IF-2 (925 aa).

Disordered stretches follow at residues 52–84 (GGGK…VKAP) and 98–326 (AGGN…GVRL). Over residues 57–68 (AEGAAKAPAKAA) the composition is skewed to low complexity. Basic and acidic residues predominate over residues 69–84 (AKGDAKTAAKGDVKAP). Positions 98–138 (AGGNGEAAAPPAQPGGTATTPAAQATPEAPARPGPAAARPS) are enriched in low complexity. Pro residues-rich tracts occupy residues 139-169 (APAP…PAPK) and 193-207 (PRPV…PGAP). Residues 236-296 (RPGGGRPGGP…GAAGAFGRPG (61 aa)) are compositionally biased toward gly residues. The span at 300 to 309 (RRGRKSKRQK) shows a compositional bias: basic residues. Positions 421–592 (TRPPVVTVMG…AVLLTADAAL (172 aa)) constitute a tr-type G domain. The interval 430–437 (GHVDHGKT) is G1. A GTP-binding site is contributed by 430-437 (GHVDHGKT). Positions 455 to 459 (GITQH) are G2. A G3 region spans residues 480–483 (DTPG). GTP contacts are provided by residues 480–484 (DTPGH) and 534–537 (NKID). Residues 534–537 (NKID) are G4. The tract at residues 570 to 572 (SAK) is G5.

The protein belongs to the TRAFAC class translation factor GTPase superfamily. Classic translation factor GTPase family. IF-2 subfamily.

Its subcellular location is the cytoplasm. In terms of biological role, one of the essential components for the initiation of protein synthesis. Protects formylmethionyl-tRNA from spontaneous hydrolysis and promotes its binding to the 30S ribosomal subunits. Also involved in the hydrolysis of GTP during the formation of the 70S ribosomal complex. This Mycolicibacterium paratuberculosis (strain ATCC BAA-968 / K-10) (Mycobacterium paratuberculosis) protein is Translation initiation factor IF-2.